Here is a 128-residue protein sequence, read N- to C-terminus: Large ribosomal subunit protein bL20c (128 aa).

The protein belongs to the bacterial ribosomal protein bL20 family.

The protein resides in the plastid. The protein localises to the chloroplast. Binds directly to 23S ribosomal RNA and is necessary for the in vitro assembly process of the 50S ribosomal subunit. It is not involved in the protein synthesizing functions of that subunit. The chain is Large ribosomal subunit protein bL20c from Gossypium barbadense (Sea Island cotton).